The sequence spans 406 residues: Transposase for insertion sequence element IS1001 (406 aa).

It belongs to the transposase 12 family.

Involved in the transposition of the insertion sequence. The sequence is that of Transposase for insertion sequence element IS1001 (tnpA) from Bordetella parapertussis.